The sequence spans 310 residues: Apolipoprotein E (310 aa).

Residues Met1 to Ala18 form the signal peptide. 8 tandem repeats follow at residues Val77–Gly98, Pro99–Gly120, Ala121–Gly142, Gln143–Leu164, Arg165–Glu186, Arg187–Ala204, Thr205–Arg226, and Gly227–Gln248. The 8 X 22 AA approximate tandem repeats stretch occupies residues Val77–Gln248. At Met140 the chain carries Methionine sulfoxide. Ser144 is subject to Phosphoserine. The LDL and other lipoprotein receptors binding stretch occupies residues His155 to Arg165. A heparin-binding site is contributed by Leu159–Arg162. Residues Ala203–Met283 form a lipid-binding and lipoprotein association region. Gly222–Leu229 provides a ligand contact to heparin. A homooligomerization region spans residues Asn259–Gln310. Positions Arg271–Met283 are specificity for association with VLDL.

Belongs to the apolipoprotein A1/A4/E family. As to quaternary structure, homotetramer. May interact with ABCA1; functionally associated with ABCA1 in the biogenesis of HDLs. May interact with APP/A4 amyloid-beta peptide; the interaction is extremely stable in vitro but its physiological significance is unclear. May interact with MAPT. May interact with MAP2. In the cerebrospinal fluid, interacts with secreted SORL1. Interacts with PMEL; this allows the loading of PMEL luminal fragment on ILVs to induce fibril nucleation. In terms of processing, APOE exists as multiple glycosylated and sialylated glycoforms within cells and in plasma. The extent of glycosylation and sialylation are tissue and context specific. Glycated in plasma VLDL. Post-translationally, phosphorylated by FAM20C in the extracellular medium.

It localises to the secreted. Its subcellular location is the extracellular space. The protein resides in the extracellular matrix. It is found in the extracellular vesicle. The protein localises to the endosome. It localises to the multivesicular body. Its function is as follows. APOE is an apolipoprotein, a protein associating with lipid particles, that mainly functions in lipoprotein-mediated lipid transport between organs via the plasma and interstitial fluids. APOE is a core component of plasma lipoproteins and is involved in their production, conversion and clearance. Apolipoproteins are amphipathic molecules that interact both with lipids of the lipoprotein particle core and the aqueous environment of the plasma. As such, APOE associates with chylomicrons, chylomicron remnants, very low density lipoproteins (VLDL) and intermediate density lipoproteins (IDL) but shows a preferential binding to high-density lipoproteins (HDL). It also binds a wide range of cellular receptors including the LDL receptor/LDLR, the LDL receptor-related proteins LRP1, LRP2 and LRP8 and the very low-density lipoprotein receptor/VLDLR that mediate the cellular uptake of the APOE-containing lipoprotein particles. Finally, APOE also has a heparin-binding activity and binds heparan-sulfate proteoglycans on the surface of cells, a property that supports the capture and the receptor-mediated uptake of APOE-containing lipoproteins by cells. A main function of APOE is to mediate lipoprotein clearance through the uptake of chylomicrons, VLDLs, and HDLs by hepatocytes. APOE is also involved in the biosynthesis by the liver of VLDLs as well as their uptake by peripheral tissues ensuring the delivery of triglycerides and energy storage in muscle, heart and adipose tissues. By participating in the lipoprotein-mediated distribution of lipids among tissues, APOE plays a critical role in plasma and tissues lipid homeostasis. APOE is also involved in two steps of reverse cholesterol transport, the HDLs-mediated transport of cholesterol from peripheral tissues to the liver, and thereby plays an important role in cholesterol homeostasis. First, it is functionally associated with ABCA1 in the biogenesis of HDLs in tissues. Second, it is enriched in circulating HDLs and mediates their uptake by hepatocytes. APOE also plays an important role in lipid transport in the central nervous system, regulating neuron survival and sprouting. The sequence is that of Apolipoprotein E (APOE) from Tapirus indicus (Asiatic tapir).